A 299-amino-acid chain; its full sequence is Probable lipid kinase YegS (299 aa).

Residues A2 to T133 enclose the DAGKc domain. ATP-binding positions include T40, G66 to E72, and T95. Positions 215, 218, and 220 each coordinate Mg(2+). Residue E271 is the Proton acceptor of the active site.

It belongs to the diacylglycerol/lipid kinase family. YegS lipid kinase subfamily. It depends on Mg(2+) as a cofactor. Ca(2+) serves as cofactor.

It is found in the cytoplasm. Probably phosphorylates lipids; the in vivo substrate is unknown. The chain is Probable lipid kinase YegS from Escherichia coli O17:K52:H18 (strain UMN026 / ExPEC).